The chain runs to 154 residues: Protein aau3 (154 aa).

The HTH rrf2-type domain maps to 2-132 (RLTKQTNYAV…QGYTIDDLVK (131 aa)). Cysteine 91, cysteine 99, and cysteine 105 together coordinate [2Fe-2S] cluster.

[2Fe-2S] cluster is required as a cofactor.

Functionally, required for growth utilizing PHB cycle intermediates. The polypeptide is Protein aau3 (aau3) (Rhizobium meliloti (strain 1021) (Ensifer meliloti)).